A 1291-amino-acid polypeptide reads, in one-letter code: Cytoplasmic FMR1-interacting protein (1291 aa).

The tract at residues 1270–1291 is disordered; it reads PSVISSSSHYQDPQKLRQSINN. Positions 1271-1291 are enriched in polar residues; sequence SVISSSSHYQDPQKLRQSINN.

It belongs to the CYFIP family. As to quaternary structure, interacts with Fmr1 and Rac1. Component of the WAVE complex composed of Hem/Kette, Scar/Wave and Cyfip where it binds through its C-terminus directly to Hem. In the embryo, expressed mainly in the gut and in the developing central nervous system where high levels of expression are found in the CNS neuropile. Expression in the gut diminishes as development proceeds (at protein level). In the adult, expressed specifically in the nervous system.

It localises to the cytoplasm. Its function is as follows. Plays a role in guidance and morphology of central and peripheral axons and in synaptic morphology. Also required for formation of cell membrane protrusions and for bristle development. Plays a role in regulating mitochondrial activity, energy metabolism and membrane potential which maintains normal gamma-aminobutyric acid (GABA) signaling and ensures normal social behavior. The sequence is that of Cytoplasmic FMR1-interacting protein from Drosophila melanogaster (Fruit fly).